A 315-amino-acid polypeptide reads, in one-letter code: Glutaminase (315 aa).

The substrate site is built by S70, N120, E166, N173, Y197, Y249, and V267.

This sequence belongs to the glutaminase family. Homotetramer.

It carries out the reaction L-glutamine + H2O = L-glutamate + NH4(+). The polypeptide is Glutaminase (Mesorhizobium japonicum (strain LMG 29417 / CECT 9101 / MAFF 303099) (Mesorhizobium loti (strain MAFF 303099))).